The following is a 142-amino-acid chain: Transcription antitermination protein NusB (142 aa).

The protein belongs to the NusB family.

Its function is as follows. Involved in transcription antitermination. Required for transcription of ribosomal RNA (rRNA) genes. Binds specifically to the boxA antiterminator sequence of the ribosomal RNA (rrn) operons. The chain is Transcription antitermination protein NusB from Buchnera aphidicola subsp. Cinara cedri (strain Cc).